We begin with the raw amino-acid sequence, 618 residues long: Nuclear cap-binding protein subunit 3 (618 aa).

Residues 1 to 53 (MAAVRGLRVSVKAGGGAEPEPMEVEEGEVEAAAGRTSPVEATADQTSPREVVP) are disordered. Over residues 20-29 (EPMEVEEGEV) the composition is skewed to acidic residues. Residues 117 to 178 (ETLYICGVDE…LSSKPTNEKG (62 aa)) are RNA recognition motif (RRM) domain. The WLDD motif; essential for 7-methylguanosine-containing mRNA cap binding motif lies at 146–149 (WLDD). Disordered stretches follow at residues 170 to 250 (SSKP…DLRP), 342 to 366 (PEEP…DDRV), and 426 to 618 (QLKT…DTDS). Residues 174–188 (TNEKGQRKKDGEHRS) show a composition bias toward basic and acidic residues. Residues 205-223 (DETEEGEVEEDNPNDAEVE) are compositionally biased toward acidic residues. Over residues 231-240 (PPETLSQAEQ) the composition is skewed to polar residues. Positions 344 to 365 (EPIEEEEEEEEEEEEDMDEDDR) are enriched in acidic residues. The segment covering 436 to 450 (SDSAGNSVKSRIGSK) has biased composition (polar residues). Positions 451–468 (SHSEKPADVRLILEEKRQ) are enriched in basic and acidic residues. Low complexity predominate over residues 469 to 481 (STASRQQSSSSGK). Composition is skewed to basic and acidic residues over residues 507–517 (SRREPLSDVHS), 550–562 (PKEK…KSGE), and 583–596 (IKEK…KSRL). The segment covering 609-618 (ESSSGSDTDS) has biased composition (low complexity).

It belongs to the NCBP3 family. In terms of assembly, component of an alternative cap-binding complex (CBC) composed of NCBP1/CBP80 and NCBP3.

The protein resides in the nucleus. Its subcellular location is the cytoplasm. Functionally, associates with NCBP1/CBP80 to form an alternative cap-binding complex (CBC) which plays a key role in mRNA export. NCBP3 serves as adapter protein linking the capped RNAs (m7GpppG-capped RNA) to NCBP1/CBP80. Unlike the conventional CBC with NCBP2 which binds both small nuclear RNA (snRNA) and messenger (mRNA) and is involved in their export from the nucleus, the alternative CBC with NCBP3 does not bind snRNA and associates only with mRNA thereby playing a role in only mRNA export. This chain is Nuclear cap-binding protein subunit 3, found in Xenopus laevis (African clawed frog).